A 197-amino-acid polypeptide reads, in one-letter code: Probable GTP-binding protein EngB (197 aa).

Residues 22–194 (DLPEIAFAGR…LETIARMTGI (173 aa)) form the EngB-type G domain. GTP is bound by residues 30–37 (GRSNVGKS), 57–61 (GKTRL), 75–78 (DLPG), 142–145 (TKAD), and 173–175 (FST). Positions 37 and 59 each coordinate Mg(2+).

The protein belongs to the TRAFAC class TrmE-Era-EngA-EngB-Septin-like GTPase superfamily. EngB GTPase family. Mg(2+) is required as a cofactor.

Its function is as follows. Necessary for normal cell division and for the maintenance of normal septation. This Desulfosudis oleivorans (strain DSM 6200 / JCM 39069 / Hxd3) (Desulfococcus oleovorans) protein is Probable GTP-binding protein EngB.